Reading from the N-terminus, the 200-residue chain is uncharacterized protein (200 aa).

This is an uncharacterized protein from Amazona oratrix (yellow-headed parrot).